A 252-amino-acid chain; its full sequence is Iron-sulfur cluster co-chaperone protein HscB homolog (252 aa).

The N-terminal 59 residues, 1-59 (MKKTKTMVASISTLIRRTYPSTNQCNSLATIQSQTQLPRESLQHHSSAEGRLRFSGRVF), are a transit peptide targeting the mitochondrion. In terms of domain architecture, J spans 93 to 165 (DYFQIFGLEK…LSRAMYIMKL (73 aa)).

This sequence belongs to the HscB family. Interacts with ISU1 and HSP70-9/HSCA1.

Its subcellular location is the mitochondrion. The protein localises to the cytoplasm. The protein resides in the cytosol. Co-chaperone required for the assembly of iron-sulfur [Fe-S] clusters in both mitochondria and cytosol. Required for the activity of iron-sulfur proteins such as aconitase and succinate dehydrogenase. Involved in iron homeostasis and may take part in the control of iron translocation from roots to shoots. This is Iron-sulfur cluster co-chaperone protein HscB homolog from Arabidopsis thaliana (Mouse-ear cress).